The following is a 1403-amino-acid chain: Baculoviral IAP repeat-containing protein 1f (1403 aa).

BIR repeat units follow at residues 60 to 127, 159 to 227, and 278 to 345; these read EAKR…CEFL, EEAR…CEFL, and EELR…CVFL. The Zn(2+) site is built by Cys-315, Cys-318, His-335, and Cys-342. The NACHT domain occupies 464-759; sequence SVMCVEGEAG…EFLAAVRLTE (296 aa). 473–478 contributes to the ATP binding site; that stretch reads GSGKTT.

In terms of assembly, component of the NLRC4 inflammasome, at least composed of NLRC4, caspase-1 (CASP1) and some NAIP protein. As to quaternary structure, (Microbial infection) Interacts with S.typhimurium (Salmonella) flagellin.

In terms of biological role, sensor component of the NLRC4 inflammasome that specifically recognizes and binds flagellin from pathogenic bacteria. Association of pathogenic bacteria proteins drives in turn drive assembly and activation of the NLRC4 inflammasome, promoting caspase-1 activation, cytokine production and macrophage pyroptosis. The NLRC4 inflammasome is activated as part of the innate immune response to a range of intracellular bacteria. The NLRC4 inflammasome senses Gram-negative bacteria such as L.pneumophila and P.aeruginosa, enteric pathogens S.typhimurium (Salmonella) and S.flexneri. May contribute to prevent motor-neuron apoptosis induced by a variety of signals. The sequence is that of Baculoviral IAP repeat-containing protein 1f (Naip6) from Mus musculus (Mouse).